Here is a 349-residue protein sequence, read N- to C-terminus: DNA replication and repair protein RecF (349 aa).

30 to 37 (GKNGSGKT) contributes to the ATP binding site.

Belongs to the RecF family.

The protein resides in the cytoplasm. Functionally, the RecF protein is involved in DNA metabolism; it is required for DNA replication and normal SOS inducibility. RecF binds preferentially to single-stranded, linear DNA. It also seems to bind ATP. This chain is DNA replication and repair protein RecF, found in Francisella tularensis subsp. holarctica (strain FTNF002-00 / FTA).